A 2491-amino-acid chain; its full sequence is Cation-independent mannose-6-phosphate receptor (2491 aa).

Residues 1–40 form the signal peptide; that stretch reads MGAAAGRSPHLGPAPARRPQRSLLLLQLLLLVAAPGSTQA. The Lumenal portion of the chain corresponds to 41–2304; it reads QAAPFPELCS…MHKGLSERSQ (2264 aa). 12 MRH domains span residues 47 to 163, 172 to 320, 326 to 468, 473 to 619, 625 to 762, 765 to 924, 932 to 1079, 1082 to 1219, 1225 to 1363, 1367 to 1508, 1514 to 1648, and 1650 to 1797; these read ELCS…ACKK, VPCY…ACHR, KTCS…ACVK, LLCG…ACVL, ENCT…ACPE, LECV…ACPI, QACS…ACVP, VDCQ…ACPV, DNCE…ACPP, TECS…ACPM, DDCQ…ACEQ, and TECS…VCPD. Disulfide bonds link Cys-49/Cys-69 and Cys-77/Cys-84. A glycan (N-linked (GlcNAc...) asparagine) is linked at Asn-112. 8 disulfide bridges follow: Cys-117/Cys-149, Cys-134/Cys-161, Cys-174/Cys-212, Cys-228/Cys-235, Cys-275/Cys-306, Cys-288/Cys-318, Cys-328/Cys-366, and Cys-374/Cys-382. N-linked (GlcNAc...) asparagine glycans are attached at residues Asn-400 and Asn-435. 4 disulfides stabilise this stretch: Cys-420/Cys-454, Cys-434/Cys-466, Cys-475/Cys-519, and Cys-531/Cys-538. Residues Asn-543 and Asn-581 are each glycosylated (N-linked (GlcNAc...) asparagine). Intrachain disulfides connect Cys-572–Cys-605 and Cys-586–Cys-617. Residue Asn-626 is glycosylated (N-linked (GlcNAc...) asparagine). 5 cysteine pairs are disulfide-bonded: Cys-627-Cys-664, Cys-672-Cys-679, Cys-731-Cys-760, Cys-767-Cys-814, and Cys-823-Cys-830. Residue Asn-747 is glycosylated (N-linked (GlcNAc...) asparagine). Asn-871 carries N-linked (GlcNAc...) asparagine glycosylation. 7 disulfides stabilise this stretch: Cys-875/Cys-910, Cys-893/Cys-922, Cys-934/Cys-970, Cys-976/Cys-987, Cys-1042/Cys-1077, Cys-1084/Cys-1125, and Cys-1134/Cys-1142. N-linked (GlcNAc...) asparagine glycosylation is found at Asn-951 and Asn-957. Asn-1164 carries an N-linked (GlcNAc...) asparagine glycan. 4 disulfides stabilise this stretch: Cys-1177–Cys-1205, Cys-1190–Cys-1217, Cys-1227–Cys-1262, and Cys-1270–Cys-1282. Asn-1246 carries an N-linked (GlcNAc...) asparagine glycan. The N-linked (GlcNAc...) asparagine glycan is linked to Asn-1312. 24 cysteine pairs are disulfide-bonded: Cys-1319-Cys-1349, Cys-1333-Cys-1361, Cys-1369-Cys-1408, Cys-1420-Cys-1427, Cys-1461-Cys-1494, Cys-1476-Cys-1506, Cys-1516-Cys-1553, Cys-1559-Cys-1566, Cys-1598-Cys-1634, Cys-1614-Cys-1646, Cys-1652-Cys-1695, Cys-1706-Cys-1713, Cys-1750-Cys-1783, Cys-1766-Cys-1795, Cys-1804-Cys-1839, Cys-1850-Cys-1856, Cys-1893-Cys-1975, Cys-1903-Cys-1927, Cys-1917-Cys-1942, Cys-1957-Cys-1987, Cys-1994-Cys-2029, Cys-2039-Cys-2046, Cys-2082-Cys-2113, and Cys-2096-Cys-2125. An N-linked (GlcNAc...) asparagine glycan is attached at Asn-1656. Asn-1757 is a glycosylation site (N-linked (GlcNAc...) asparagine). Residues 1802-1989 form the Fibronectin type-II domain; sequence DGCTLTDEQL…EWKTKVVCPP (188 aa). Asn-1816 carries an N-linked (GlcNAc...) asparagine glycan. 2 consecutive MRH domains span residues 1992 to 2127 and 2135 to 2280; these read LECK…ACAV and VNGT…VCPL. N-linked (GlcNAc...) asparagine glycosylation occurs at Asn-2085. Residue Asn-2136 is glycosylated (N-linked (GlcNAc...) asparagine). Disulfide bonds link Cys-2188–Cys-2194, Cys-2232–Cys-2266, and Cys-2248–Cys-2278. The chain crosses the membrane as a helical span at residues 2305–2327; sequence AVGAVLSLLLVALTCCLLALLLY. The Cytoplasmic portion of the chain corresponds to 2328 to 2491; it reads KKERRETVIS…DDSDEDLLHI (164 aa). Lys-2352 carries the post-translational modification N6-acetyllysine. Ser-2409 bears the Phosphoserine mark. Residues 2424-2491 form a disordered region; the sequence is GRGAGAESSH…DDSDEDLLHI (68 aa). Residue Arg-2425 is modified to Omega-N-methylarginine. Over residues 2444–2459 the composition is skewed to basic and acidic residues; that stretch reads QEREDDRVGLVRGEKA. Over residues 2464–2477 the composition is skewed to polar residues; that stretch reads SSSAQQKTVSSTKL. Phosphoserine occurs at positions 2479 and 2484. Positions 2479–2491 are enriched in basic and acidic residues; that stretch reads SFHDDSDEDLLHI.

This sequence belongs to the MRL1/IGF2R family. In terms of assembly, binds HA-I and HA-II plasma membrane adapters. Interacts with DPP4; the interaction is direct. Binds GGA1, GGA2 and GGA3. Interacts with the heterotrimeric retromer cargo-selective complex (CSC), formed by VPS26 (VPS26A or VPS26B), VPS29 and VPS35; which is involved in retrograde trafficking of the receptor from endosomes to the Golgi apparatus. Palmitoylated. Undergoes cysteine S-palmitoylation which promotes interaction with the retromer cargo-selective complex which mediates its retrograde trafficking to the Golgi apparatus.

The protein resides in the golgi apparatus membrane. It localises to the endosome membrane. In terms of biological role, mediates the transport of phosphorylated lysosomal enzymes from the Golgi complex and the cell surface to lysosomes. Lysosomal enzymes bearing phosphomannosyl residues bind specifically to mannose-6-phosphate receptors in the Golgi apparatus and the resulting receptor-ligand complex is transported to an acidic prelysosomal compartment where the low pH mediates the dissociation of the complex. The receptor is then recycled back to the Golgi for another round of trafficking through its binding to the retromer. This receptor also binds IGF2. Acts as a positive regulator of T-cell coactivation by binding DPP4. The protein is Cation-independent mannose-6-phosphate receptor (IGF2R) of Homo sapiens (Human).